Here is a 289-residue protein sequence, read N- to C-terminus: Extracellular ribonuclease (289 aa).

The first 24 residues, 1 to 24, serve as a signal peptide directing secretion; sequence MTKKLWFLPIVCLFFILGWTAPSA. A propeptide spanning residues 25 to 51 is cleaved from the precursor; sequence SAGAPADTNLYSRLAVSTAGGTTLFPQ. The interval 177–197 is disordered; it reads FDNGGSEYPKAPGNYYDGDSW.

The protein resides in the secreted. Functionally, mg(2+)-activated ribonuclease which hydrolyzes RNA apparently nonspecifically into oligonucleotides with 5'-terminal phosphate. The polypeptide is Extracellular ribonuclease (bsn) (Bacillus amyloliquefaciens (Bacillus velezensis)).